The chain runs to 308 residues: UPF0282 protein M1425_2116 (308 aa).

The protein belongs to the UPF0282 family.

In Saccharolobus islandicus (strain M.14.25 / Kamchatka #1) (Sulfolobus islandicus), this protein is UPF0282 protein M1425_2116.